A 57-amino-acid polypeptide reads, in one-letter code: Large ribosomal subunit protein eL37 (57 aa).

Zn(2+) is bound by residues Cys20, Cys23, Cys35, and Cys38. Residues 20-38 (CRRCGEKSYHKQKKVCASC) form a C4-type zinc finger.

Belongs to the eukaryotic ribosomal protein eL37 family. It depends on Zn(2+) as a cofactor.

Binds to the 23S rRNA. The chain is Large ribosomal subunit protein eL37 from Natronomonas pharaonis (strain ATCC 35678 / DSM 2160 / CIP 103997 / JCM 8858 / NBRC 14720 / NCIMB 2260 / Gabara) (Halobacterium pharaonis).